A 2175-amino-acid polypeptide reads, in one-letter code: Non-reducing polyketide synthase PKS1 (2175 aa).

The N-terminal acylcarrier protein transacylase domain (SAT) stretch occupies residues 5–242 (LLFGDQTAEQ…VSIPIYGPYH (238 aa)). Residues 369–801 (TDKIAIVGMA…GGNTALLIED (433 aa)) enclose the Ketosynthase family 3 (KS3) domain. Residues cysteine 541, histidine 676, and histidine 719 each act as for beta-ketoacyl synthase activity in the active site. Residues 900–1212 (FCFTGQGSQY…ISTSICHLFT (313 aa)) are malonyl-CoA:ACP transacylase (MAT) domain. Serine 988 serves as the catalytic For acyl/malonyl transferase activity. A product template (PT) domain region spans residues 1285–1604 (STSCQNVISE…RKVLNVFLPP (320 aa)). The segment at 1289-1424 (QNVISEEFDG…CTIRYEDKAV (136 aa)) is N-terminal hotdog fold. The PKS/mFAS DH domain maps to 1289–1599 (QNVISEEFDG…FQQIPRKVLN (311 aa)). Histidine 1321 acts as the Proton acceptor; for dehydratase activity in catalysis. Residues 1452–1599 (AHKVQRGMAY…FQQIPRKVLN (148 aa)) are C-terminal hotdog fold. Aspartate 1512 serves as the catalytic Proton donor; for dehydratase activity. A disordered region spans residues 1640 to 1664 (PVRKSAGPAKAAAAPSMPKPSKVAA). Positions 1643–1664 (KSAGPAKAAAAPSMPKPSKVAA) are enriched in low complexity. The Carrier 1 domain occupies 1666–1743 (KPAGSMVDKV…EMKKYFSQFN (78 aa)). Serine 1703 is modified (O-(pantetheine 4'-phosphoryl)serine). Residues 1766–1804 (ATPFDEMSTPASSAPSVPQSDAGKPSPDSPTGDSLSDDV) form a disordered region. The span at 1774–1784 (TPASSAPSVPQ) shows a compositional bias: polar residues. A Carrier 2 domain is found at 1801–1878 (SDDVGDVSIA…DIENALGMRP (78 aa)). Serine 1838 carries the post-translational modification O-(pantetheine 4'-phosphoryl)serine. The segment at 1879-1899 (KPKAVGPKLSKPSTKTDMNEV) is disordered. Over residues 1889-1899 (KPSTKTDMNEV) the composition is skewed to polar residues. Residues 1932 to 2158 (KVFFLPDGSG…GHHFSMMKDP (227 aa)) form a claisen cyclase domain region. The For Claisen cyclase activity role is filled by serine 2002.

Pantetheine 4'-phosphate serves as cofactor.

It catalyses the reaction 6 malonyl-CoA + acetyl-CoA + 6 H(+) = naphtopyrone YWA1 + 6 CO2 + 7 CoA + H2O. It functions in the pathway pigment biosynthesis; melanin biosynthesis. Non-reducing polyketide synthase; part of the gene cluster 29 that mediates the biosynthesis of mediates the biosynthesis of dihydroxynaphthalene (DHN)-melanin, a bluish-green pigment and a structural component of the conidial wall. The first step of the pathway is the production of the heptaketide naphtopyrone YWA1 by the polyketide synthase PKS1 though condensation of acetyl-CoA with malonyl-CoA. The chain is Non-reducing polyketide synthase PKS1 from Zymoseptoria tritici (strain CBS 115943 / IPO323) (Speckled leaf blotch fungus).